Consider the following 185-residue polypeptide: Regulator of rDNA transcription protein 13 (185 aa).

WD repeat units follow at residues G9–E48, G71–F108, and H111–S148.

Its function is as follows. May be involved in the modulation of rDNA transcription. The sequence is that of Regulator of rDNA transcription protein 13 (RRT13) from Saccharomyces cerevisiae (strain ATCC 204508 / S288c) (Baker's yeast).